Here is a 171-residue protein sequence, read N- to C-terminus: Glutathione peroxidase-like peroxiredoxin GPX3 (171 aa).

Catalysis depends on Cys-43, which acts as the Cysteine sulfenic acid (-SOH) intermediate. Cys-43 and Cys-89 form a disulfide bridge.

Belongs to the glutathione peroxidase family. In terms of assembly, interacts with CAP1 and probably YBP1.

The catalysed reaction is a hydroperoxide + [thioredoxin]-dithiol = an alcohol + [thioredoxin]-disulfide + H2O. In terms of biological role, involved in oxidative stress response and redox homeostasis. Functions as a sensor and transducer of hydroperoxide stress. In response to hydroperoxide stress it oxidizes (activates) the transcription activator CAP1, which is involved in transcription activation of genes of the oxidative stress response pathway. May also play a direct role in hydroperoxide scavenging. The enzyme is not required for the glutaredoxin-mediated antioxidant function. In the presence of peroxides, GPX3 is directly oxidized at Cys-43 to form a cysteine sulfenic acid (-SOH). Cys-43-SOH then forms either an intramolecular disulfide bond (Cys-43 with Cys-89) or a transient, intermolecular disulfide bond with 'Cys-446' of CAP1, which is further resolved into a CAP1 intramolecular disulfide bond ('Cys-303' with 'Cys-598'), which causes its nuclear accumulation and activation, and a reduced Cys-43 in GPX3. Required for C.albicans-mediated macrophage killing. The polypeptide is Glutathione peroxidase-like peroxiredoxin GPX3 (Candida albicans (strain SC5314 / ATCC MYA-2876) (Yeast)).